A 1848-amino-acid chain; its full sequence is Chitin synthase E (1848 aa).

Over residues methionine 1 to serine 17 the composition is skewed to low complexity. Residues methionine 1–proline 22 are disordered. The 779-residue stretch at methionine 1–glutamate 779 folds into the Myosin motor domain. Glycine 102–threonine 109 serves as a coordination point for ATP. A disordered region spans residues serine 593–aspartate 621. Residues leucine 659–aspartate 683 form an actin-binding region. The next 2 membrane-spanning stretches (helical) occupy residues tryptophan 889–glycine 909 and leucine 928–valine 948. One can recognise a Cytochrome b5 heme-binding domain in the interval glutamine 952–serine 1040. 2 N-linked (GlcNAc...) asparagine glycosylation sites follow: asparagine 1038 and asparagine 1063. The helical transmembrane segment at phenylalanine 1200–leucine 1220 threads the bilayer. Residues asparagine 1423, asparagine 1457, and asparagine 1563 are each glycosylated (N-linked (GlcNAc...) asparagine). The next 3 helical transmembrane spans lie at leucine 1595–valine 1615, isoleucine 1621–isoleucine 1641, and methionine 1648–leucine 1668. Asparagine 1786 is a glycosylation site (N-linked (GlcNAc...) asparagine). The 56-residue stretch at leucine 1790 to alanine 1845 folds into the DEK-C domain.

It in the N-terminal section; belongs to the TRAFAC class myosin-kinesin ATPase superfamily. Myosin family. This sequence in the C-terminal section; belongs to the chitin synthase family. Class V subfamily.

It is found in the cell membrane. It localises to the cell septum. The protein localises to the cell tip. It catalyses the reaction [(1-&gt;4)-N-acetyl-beta-D-glucosaminyl](n) + UDP-N-acetyl-alpha-D-glucosamine = [(1-&gt;4)-N-acetyl-beta-D-glucosaminyl](n+1) + UDP + H(+). Functionally, polymerizes chitin, a structural polymer of the cell wall and septum, by transferring the sugar moiety of UDP-GlcNAc to the non-reducing end of the growing chitin polymer. Important for hyphal growth and conidiophore development but not pathogenicity. In Aspergillus fumigatus (strain ATCC MYA-4609 / CBS 101355 / FGSC A1100 / Af293) (Neosartorya fumigata), this protein is Chitin synthase E.